The following is a 211-amino-acid chain: uncharacterized protein (211 aa).

This is an uncharacterized protein from Archaeoglobus fulgidus (strain ATCC 49558 / DSM 4304 / JCM 9628 / NBRC 100126 / VC-16).